Reading from the N-terminus, the 565-residue chain is Polycomb protein EED (565 aa).

WD repeat units lie at residues 89 to 133 (DDGN…LYRT), 136 to 176 (GHGG…EKQP), 185 to 224 (GHSY…NEHM), and 240 to 278 (IHNN…SDDP). The interval 417 to 488 (VKKAPGAAGS…SASPDPDSPF (72 aa)) is disordered. Positions 429–450 (GTAANGGHNNNNNNNNNNNNNN) are enriched in low complexity. The segment covering 451–468 (HETGSQRSFSATNNLSNS) has biased composition (polar residues). The stretch at 519–559 (IDGAFVGRQVGWSPEGEWCVVVGNGNRALIYQRWGKERGLG) is one WD 5 repeat.

The protein belongs to the WD repeat ESC family. In terms of assembly, component of the polycomb repressive complex 2 (PRC2) that consists of four core subunits icluding EZH2, EED, SUZ12, and RBBP4, among which EZH2 is the catalytic subunit and which minimally requires EED and SUZ12 for catalysis.

It localises to the nucleus. In terms of biological role, component of the of the Polycomb Repressive Complex 2 (PRC2), a histone H3 lysine methyltransferase responsible for generating mono-, di-, and tri-methylation on Lys27 (H3K27me1, H3K27me2 and H3K27me3). The tri-methylated form is known to be critical in gene repression, and its proper placement is essential in defining repression patterns during development. EED is not a catalytic subunit but is required for the complex regulation of histone H3 lysine methylation by EZH2. The polypeptide is Polycomb protein EED (Chaetomium thermophilum (strain DSM 1495 / CBS 144.50 / IMI 039719) (Thermochaetoides thermophila)).